Reading from the N-terminus, the 439-residue chain is Ribosomal protein uS12 methylthiotransferase RimO (439 aa).

One can recognise an MTTase N-terminal domain in the interval K7–N119. 6 residues coordinate [4Fe-4S] cluster: C16, C50, C82, C151, C155, and C158. The Radical SAM core domain occupies T137–K368.

The protein belongs to the methylthiotransferase family. RimO subfamily. It depends on [4Fe-4S] cluster as a cofactor.

Its subcellular location is the cytoplasm. The catalysed reaction is L-aspartate(89)-[ribosomal protein uS12]-hydrogen + (sulfur carrier)-SH + AH2 + 2 S-adenosyl-L-methionine = 3-methylsulfanyl-L-aspartate(89)-[ribosomal protein uS12]-hydrogen + (sulfur carrier)-H + 5'-deoxyadenosine + L-methionine + A + S-adenosyl-L-homocysteine + 2 H(+). Its function is as follows. Catalyzes the methylthiolation of an aspartic acid residue of ribosomal protein uS12. The polypeptide is Ribosomal protein uS12 methylthiotransferase RimO (Helicobacter pylori (strain ATCC 700392 / 26695) (Campylobacter pylori)).